The sequence spans 83 residues: RNA-binding protein Hfq (83 aa).

One can recognise a Sm domain in the interval 10–69 (DPFLNALRREHVPVSIYLVNGIKLQGQIESFDQYVVLLRNTVTQMVYKHAISTIVPGRAV).

The protein belongs to the Hfq family. In terms of assembly, homohexamer.

In terms of biological role, RNA chaperone that binds small regulatory RNA (sRNAs) and mRNAs to facilitate mRNA translational regulation in response to envelope stress, environmental stress and changes in metabolite concentrations. Also binds with high specificity to tRNAs. The chain is RNA-binding protein Hfq from Delftia acidovorans (strain DSM 14801 / SPH-1).